The sequence spans 271 residues: Urease accessory protein UreD (271 aa).

It belongs to the UreD family. As to quaternary structure, ureD, UreF and UreG form a complex that acts as a GTP-hydrolysis-dependent molecular chaperone, activating the urease apoprotein by helping to assemble the nickel containing metallocenter of UreC. The UreE protein probably delivers the nickel.

It localises to the cytoplasm. Functionally, required for maturation of urease via the functional incorporation of the urease nickel metallocenter. In Bacillus sp. (strain TB-90), this protein is Urease accessory protein UreD.